Here is a 345-residue protein sequence, read N- to C-terminus: N-malonyltransferase FDB2 (345 aa).

C110 acts as the Acyl-thioester intermediate in catalysis. H158 functions as the Proton acceptor in the catalytic mechanism. Residue D173 is part of the active site.

It belongs to the arylamine N-acetyltransferase family.

It participates in xenobiotic degradation. N-malonyltransferase; part of the Fusarium detoxification of benzoxazolinone cluster 2 (FDB2) involved in the degradation of benzoxazolinones produced by the host plant. Maize, wheat, and rye produce the 2 benzoxazinone phytoanticipins 2,4-dihy-droxy-7-methoxy-1,4-benzoxazin-3-one (DIMBOA) and 2,4-dihydroxy-1,4-benzoxazin-3-one (DIBOA) that, due to their inherent instability once released, spontaneously degrade to the more stable corresponding benzoxazolinones, 6-methoxy-2-benzoxazolinone (MBOA) and 2-benzoxazolinone (BOA), respectively. The first step in the detoxification of benzoxazolinones involves the hydrolysis of the cyclic ester bond of benzoxazolinones by the FDB1 cluster gamma-lactamase MBL1 to aminophenols. MBL1 is able to convert BOA into 2-aminophenol (2-AP), as well as MBOA into 5-methoxy-2-aminophenol (2-AMP). The FDB2 cluster N-malonyltransferase FDB2/NAT1 then metabolizes aminophenols via N-malonylation to non-toxic malonamic acids. FDB2/NAT1 converts 2-AP into N-(2-hydroxyphenyl) malonamic acid (HPMA) and 2-AMP into N-(2-hydroxy-4-methoxyphenyl) malonamic acid (HMPMA). The duplicated dienlactone hydrolases DLH1 and DLH2 may provide redundant function for hydrolyzing the lactone moiety in the BOA molecule. The roles of the amidases an other enzymes encoded by the 2 FDB clusters have not been identified so far. The chain is N-malonyltransferase FDB2 from Gibberella moniliformis (strain M3125 / FGSC 7600) (Maize ear and stalk rot fungus).